A 248-amino-acid chain; its full sequence is Probable transcriptional regulatory protein FTW_1073 (248 aa).

Belongs to the TACO1 family.

Its subcellular location is the cytoplasm. The polypeptide is Probable transcriptional regulatory protein FTW_1073 (Francisella tularensis subsp. tularensis (strain WY96-3418)).